The sequence spans 422 residues: Glucuronoxylanase XynC (422 aa).

The signal sequence occupies residues 1 to 32; it reads MIPRIKKTICVLLVCFTMLSVMLGPGATEVLA. Residue Glu-171 is the Proton donor of the active site. The active-site Nucleophile is the Glu-260.

The protein belongs to the glycosyl hydrolase 30 family.

The protein resides in the secreted. It carries out the reaction Endohydrolysis of (1-&gt;4)-beta-D-xylosyl links in some glucuronoarabinoxylans.. Its pathway is glycan degradation; xylan degradation. In terms of biological role, catalyzes the depolymerization of methylglucuronoxylan (MeGAXn) from different sources. It cleaves the beta-1,4-xylosidic bond penultimate to that linking carbon one of the xylose residue substituted with alpha-1,2-linked 4-O-methyl-D-glucuronate (MeGA). The chain is Glucuronoxylanase XynC (xynC) from Bacillus subtilis (strain 168).